The chain runs to 274 residues: MSNTTDADAKHPQSNILVEETVVYDNVFTTPLDKAARFSFDEQVVACFPDMIRRSVPGYGQMLAMLPIFAKRHCQAGQVNAEGKRVSRVYDLGCSLGGATMALLNEKGGFGKEELQIKAVDISPAMTQKAEVLLQQNYPEHDIEVITADIRGFELEPCDMVILNLTLQFLPPADRTQVLQSIYNALNDGGILVLTEKTHTGDEQDDAWLVERYYDFKRANGYSELEISGKRNALENVLITDTLDQHHQRLAEVGFNRSLTWFQFLNFASMVAFK.

Residues tyrosine 59, 93 to 95 (GCS), 149 to 150 (DI), asparagine 164, and arginine 231 each bind S-adenosyl-L-methionine.

The protein belongs to the class I-like SAM-binding methyltransferase superfamily. Cx-SAM synthase family. In terms of assembly, homodimer.

The enzyme catalyses prephenate + S-adenosyl-L-methionine = carboxy-S-adenosyl-L-methionine + 3-phenylpyruvate + H2O. In terms of biological role, catalyzes the conversion of S-adenosyl-L-methionine (SAM) to carboxy-S-adenosyl-L-methionine (Cx-SAM). The protein is Carboxy-S-adenosyl-L-methionine synthase of Psychrobacter sp. (strain PRwf-1).